A 227-amino-acid polypeptide reads, in one-letter code: 7-cyano-7-deazaguanine synthase (227 aa).

ATP is bound at residue 9 to 19 (LSGGLDSATVL). The Zn(2+) site is built by Cys189, Cys199, Cys202, and Cys205.

Belongs to the QueC family. Zn(2+) is required as a cofactor.

The catalysed reaction is 7-carboxy-7-deazaguanine + NH4(+) + ATP = 7-cyano-7-deazaguanine + ADP + phosphate + H2O + H(+). The protein operates within purine metabolism; 7-cyano-7-deazaguanine biosynthesis. Functionally, catalyzes the ATP-dependent conversion of 7-carboxy-7-deazaguanine (CDG) to 7-cyano-7-deazaguanine (preQ(0)). This Cupriavidus metallidurans (strain ATCC 43123 / DSM 2839 / NBRC 102507 / CH34) (Ralstonia metallidurans) protein is 7-cyano-7-deazaguanine synthase.